The primary structure comprises 581 residues: Proline--tRNA ligase (581 aa).

This sequence belongs to the class-II aminoacyl-tRNA synthetase family. ProS type 1 subfamily. Homodimer.

The protein localises to the cytoplasm. The enzyme catalyses tRNA(Pro) + L-proline + ATP = L-prolyl-tRNA(Pro) + AMP + diphosphate. In terms of biological role, catalyzes the attachment of proline to tRNA(Pro) in a two-step reaction: proline is first activated by ATP to form Pro-AMP and then transferred to the acceptor end of tRNA(Pro). As ProRS can inadvertently accommodate and process non-cognate amino acids such as alanine and cysteine, to avoid such errors it has two additional distinct editing activities against alanine. One activity is designated as 'pretransfer' editing and involves the tRNA(Pro)-independent hydrolysis of activated Ala-AMP. The other activity is designated 'posttransfer' editing and involves deacylation of mischarged Ala-tRNA(Pro). The misacylated Cys-tRNA(Pro) is not edited by ProRS. The protein is Proline--tRNA ligase of Azoarcus sp. (strain BH72).